The following is a 345-amino-acid chain: Phosphoribosylformylglycinamidine cyclo-ligase (345 aa).

The protein belongs to the AIR synthase family.

Its subcellular location is the cytoplasm. It catalyses the reaction 2-formamido-N(1)-(5-O-phospho-beta-D-ribosyl)acetamidine + ATP = 5-amino-1-(5-phospho-beta-D-ribosyl)imidazole + ADP + phosphate + H(+). The protein operates within purine metabolism; IMP biosynthesis via de novo pathway; 5-amino-1-(5-phospho-D-ribosyl)imidazole from N(2)-formyl-N(1)-(5-phospho-D-ribosyl)glycinamide: step 2/2. The sequence is that of Phosphoribosylformylglycinamidine cyclo-ligase from Cronobacter sakazakii (strain ATCC BAA-894) (Enterobacter sakazakii).